Consider the following 195-residue polypeptide: Cysteine/O-acetylserine efflux protein (195 aa).

Over 1 to 9 (MTPMLLSAF) the chain is Periplasmic. Residues 10 to 32 (WTYTLITALTPGPNNILALSAAT) traverse the membrane as a helical segment. Topologically, residues 33–46 (AHGFRQSIRVLAGM) are cytoplasmic. The chain crosses the membrane as a helical span at residues 47–67 (SLGFLVVMLLCAGIAFSLAVI). Residues 68-69 (DP) are Periplasmic-facing. Residues 70 to 90 (AIIHLLSWVGAAYILWLAWKI) form a helical membrane-spanning segment. At 91 to 104 (ATSPAADEKVRPKP) the chain is on the cytoplasmic side. The helical transmembrane segment at 105–125 (VGFWVSFGLQFVNVKIILYGI) threads the bilayer. Topologically, residues 126-141 (TALSTFVLPQTQALNW) are periplasmic. A helical membrane pass occupies residues 142–162 (VIGVSILLALIGTFGNVCWAL). Topologically, residues 163-176 (AGHLFQRAFRHYGR) are cytoplasmic. The helical transmembrane segment at 177 to 194 (QLNIILALLLVYCAVRIF) threads the bilayer. Tyr-195 is a topological domain (periplasmic).

It belongs to the Rht family.

The protein localises to the cell inner membrane. The enzyme catalyses O-acetyl-L-serine(in) = O-acetyl-L-serine(out). It catalyses the reaction L-cysteine(in) = L-cysteine(out). Its function is as follows. Exporter of O-acetylserine (OAS) and cysteine. This is Cysteine/O-acetylserine efflux protein (eamB) from Salmonella paratyphi A (strain ATCC 9150 / SARB42).